We begin with the raw amino-acid sequence, 593 residues long: Tyrosine-protein phosphatase non-receptor type 11 (593 aa).

SH2 domains follow at residues 6–102 (WFHP…KYPL) and 112–216 (WFHG…KQPL). Residues 247–521 (FWEEFETLQQ…RFIYMAVQHY (275 aa)) form the Tyrosine-protein phosphatase domain. Residues Asp425, 459 to 465 (CSAGIGR), and Gln506 each bind substrate. Cys459 serves as the catalytic Phosphocysteine intermediate. Over residues 548-557 (SLSDQTSGDQ) the composition is skewed to polar residues. The interval 548–575 (SLSDQTSGDQSPLPPCTPTPTCPEMRED) is disordered. Residues 559 to 568 (PLPPCTPTPT) show a composition bias toward pro residues.

This sequence belongs to the protein-tyrosine phosphatase family. Non-receptor class 2 subfamily. Post-translationally, phosphorylated by tyrosine-protein kinases. In terms of tissue distribution, expressed in embryonic fibroblast, hematopoietic, erythroid, myeloid and lymphoid cells.

Its subcellular location is the cytoplasm. The enzyme catalyses O-phospho-L-tyrosyl-[protein] + H2O = L-tyrosyl-[protein] + phosphate. Functionally, this PTPase activity may directly link growth factor receptors and other signaling proteins through protein-tyrosine phosphorylation. The SH2 regions may interact with other cellular components to modulate its own phosphatase activity against interacting substrates. May play a positive role during the stages of erythroid cell proliferation. The sequence is that of Tyrosine-protein phosphatase non-receptor type 11 (PTPN11) from Gallus gallus (Chicken).